A 444-amino-acid polypeptide reads, in one-letter code: uncharacterized protein (444 aa).

Basic and acidic residues predominate over residues methionine 1 to arginine 11. The interval methionine 1 to proline 35 is disordered.

This is an uncharacterized protein from Caenorhabditis elegans.